The following is a 306-amino-acid chain: MVGTTTTDVPPTMGVKIFSAGVAACLADVITFPLDTAKVRQQIQGEFPITSGIRYKGVLGTITTLAKTEGPLKLYSGLPAGLQRQISFASLRIGLYDTVQEFFTSGEETPSLGSKISAGLTTGGVAVFIGQPTEVVKVRLQAQSHLHGLKPRYTGTYNAYRIIATTESLTSLWKGTTPNLLRNVIINCTELVTYDLMKGALVRNEILADDVPCHFVSALIAGFCTTLLSSPVDVVKTRFINSPPGQYASVPNCAMTMFTKEGPTAFFKGFVPSFLRLGSWNVIMFVCFEKLKGELMRSRQTVDCAT.

Topologically, residues 1 to 10 (MVGTTTTDVP) are mitochondrial intermembrane. Residues 11-32 (PTMGVKIFSAGVAACLADVITF) traverse the membrane as a helical segment. Solcar repeat units lie at residues 11–102 (PTMG…VQEF), 110–200 (PSLG…MKGA), and 209–294 (DDVP…LKGE). The Mitochondrial matrix portion of the chain corresponds to 33–73 (PLDTAKVRQQIQGEFPITSGIRYKGVLGTITTLAKTEGPLK). Residue K56 coordinates fatty acid 16:0. A helical membrane pass occupies residues 74–96 (LYSGLPAGLQRQISFASLRIGLY). Topologically, residues 97 to 115 (DTVQEFFTSGEETPSLGSK) are mitochondrial intermembrane. A helical membrane pass occupies residues 116-132 (ISAGLTTGGVAVFIGQP). Residues 133–177 (TEVVKVRLQAQSHLHGLKPRYTGTYNAYRIIATTESLTSLWKGTT) are Mitochondrial matrix-facing. The chain crosses the membrane as a helical span at residues 178-194 (PNLLRNVIINCTELVTY). Topologically, residues 195-211 (DLMKGALVRNEILADDV) are mitochondrial intermembrane. The chain crosses the membrane as a helical span at residues 212–231 (PCHFVSALIAGFCTTLLSSP). The Mitochondrial matrix segment spans residues 232–265 (VDVVKTRFINSPPGQYASVPNCAMTMFTKEGPTA). Position 253 is a cysteine sulfenic acid (-SOH) (C253). The chain crosses the membrane as a helical span at residues 266-288 (FFKGFVPSFLRLGSWNVIMFVCF). Residue K268 coordinates fatty acid 16:0. At 289–306 (EKLKGELMRSRQTVDCAT) the chain is on the mitochondrial intermembrane side.

Belongs to the mitochondrial carrier (TC 2.A.29) family. Most probably functions as a monomer. Binds one purine nucleotide per monomer. However, has also been suggested to function as a homodimer or a homotetramer. Tightly associates with cardiolipin in the mitochondrion inner membrane; may stabilize and regulate its activity. Post-translationally, may undergo sulfenylation upon cold exposure. May increase the sensitivity of UCP1 thermogenic function to the activation by noradrenaline probably through structural effects. May undergo ubiquitin-mediated proteasomal degradation. In terms of tissue distribution, brown adipose tissue.

Its subcellular location is the mitochondrion inner membrane. It catalyses the reaction H(+)(in) = H(+)(out). Has no constitutive proton transporter activity and has to be activated by long-chain fatty acids/LCFAs. Inhibited by purine nucleotides. Both purine nucleotides and LCFAs bind the cytosolic side of the transporter and directly compete to activate or inhibit it. Activated by noradrenaline and reactive oxygen species. Despite lacking canonical translational encoding for selenocysteine, a small pool of the protein has been observed to selectively incorporate selenocysteine at 'Cys-253'. Selenocysteine-modified protein is highly sensitive to redox modification and may constitute a pool of protein highly sensitive to activation by elevated levels of reactive oxygen species (ROS). In terms of biological role, mitochondrial protein responsible for thermogenic respiration, a specialized capacity of brown adipose tissue and beige fat that participates in non-shivering adaptive thermogenesis to temperature and diet variations and more generally to the regulation of energy balance. Functions as a long-chain fatty acid/LCFA and proton symporter, simultaneously transporting one LCFA and one proton through the inner mitochondrial membrane. However, LCFAs remaining associated with the transporter via their hydrophobic tails, it results in an apparent transport of protons activated by LCFAs. Thereby, dissipates the mitochondrial proton gradient and converts the energy of substrate oxydation into heat instead of ATP. Regulates the production of reactive oxygen species/ROS by mitochondria. The chain is Mitochondrial brown fat uncoupling protein 1 from Oryctolagus cuniculus (Rabbit).